The chain runs to 255 residues: 1-(5-phosphoribosyl)-5-[(5-phosphoribosylamino)methylideneamino] imidazole-4-carboxamide isomerase (255 aa).

Asp8 functions as the Proton acceptor in the catalytic mechanism. The active-site Proton donor is the Asp129.

Belongs to the HisA/HisF family.

The protein localises to the cytoplasm. The catalysed reaction is 1-(5-phospho-beta-D-ribosyl)-5-[(5-phospho-beta-D-ribosylamino)methylideneamino]imidazole-4-carboxamide = 5-[(5-phospho-1-deoxy-D-ribulos-1-ylimino)methylamino]-1-(5-phospho-beta-D-ribosyl)imidazole-4-carboxamide. The protein operates within amino-acid biosynthesis; L-histidine biosynthesis; L-histidine from 5-phospho-alpha-D-ribose 1-diphosphate: step 4/9. The chain is 1-(5-phosphoribosyl)-5-[(5-phosphoribosylamino)methylideneamino] imidazole-4-carboxamide isomerase from Parasynechococcus marenigrum (strain WH8102).